The primary structure comprises 97 residues: Co-chaperonin GroES (97 aa).

The protein belongs to the GroES chaperonin family. As to quaternary structure, heptamer of 7 subunits arranged in a ring. Interacts with the chaperonin GroEL.

Its subcellular location is the cytoplasm. Together with the chaperonin GroEL, plays an essential role in assisting protein folding. The GroEL-GroES system forms a nano-cage that allows encapsulation of the non-native substrate proteins and provides a physical environment optimized to promote and accelerate protein folding. GroES binds to the apical surface of the GroEL ring, thereby capping the opening of the GroEL channel. The sequence is that of Co-chaperonin GroES from Pseudomonas putida (strain ATCC 700007 / DSM 6899 / JCM 31910 / BCRC 17059 / LMG 24140 / F1).